The following is a 470-amino-acid chain: UDP-N-acetylmuramate--L-alanine ligase (470 aa).

Residue 118–124 participates in ATP binding; sequence GTHGKTT.

This sequence belongs to the MurCDEF family.

It is found in the cytoplasm. The enzyme catalyses UDP-N-acetyl-alpha-D-muramate + L-alanine + ATP = UDP-N-acetyl-alpha-D-muramoyl-L-alanine + ADP + phosphate + H(+). It participates in cell wall biogenesis; peptidoglycan biosynthesis. In terms of biological role, cell wall formation. This chain is UDP-N-acetylmuramate--L-alanine ligase, found in Cereibacter sphaeroides (strain KD131 / KCTC 12085) (Rhodobacter sphaeroides).